A 91-amino-acid chain; its full sequence is Small ribosomal subunit protein bS20 (91 aa).

A disordered region spans residues 1–23 (MANTPSAKKRAKQAEKRRSHNAS). Over residues 7–20 (AKKRAKQAEKRRSH) the composition is skewed to basic residues.

It belongs to the bacterial ribosomal protein bS20 family.

In terms of biological role, binds directly to 16S ribosomal RNA. The polypeptide is Small ribosomal subunit protein bS20 (Pseudomonas aeruginosa (strain LESB58)).